The following is a 208-amino-acid chain: Protein-L-isoaspartate O-methyltransferase (208 aa).

Residue serine 59 is part of the active site.

The protein belongs to the methyltransferase superfamily. L-isoaspartyl/D-aspartyl protein methyltransferase family.

It is found in the cytoplasm. The enzyme catalyses [protein]-L-isoaspartate + S-adenosyl-L-methionine = [protein]-L-isoaspartate alpha-methyl ester + S-adenosyl-L-homocysteine. Its function is as follows. Catalyzes the methyl esterification of L-isoaspartyl residues in peptides and proteins that result from spontaneous decomposition of normal L-aspartyl and L-asparaginyl residues. It plays a role in the repair and/or degradation of damaged proteins. In Yersinia enterocolitica serotype O:8 / biotype 1B (strain NCTC 13174 / 8081), this protein is Protein-L-isoaspartate O-methyltransferase.